The sequence spans 461 residues: L-seryl-tRNA(Sec) selenium transferase (461 aa).

Lysine 294 carries the post-translational modification N6-(pyridoxal phosphate)lysine.

This sequence belongs to the SelA family. Requires pyridoxal 5'-phosphate as cofactor.

The protein resides in the cytoplasm. It catalyses the reaction L-seryl-tRNA(Sec) + selenophosphate + H(+) = L-selenocysteinyl-tRNA(Sec) + phosphate. The protein operates within aminoacyl-tRNA biosynthesis; selenocysteinyl-tRNA(Sec) biosynthesis; selenocysteinyl-tRNA(Sec) from L-seryl-tRNA(Sec) (bacterial route): step 1/1. In terms of biological role, converts seryl-tRNA(Sec) to selenocysteinyl-tRNA(Sec) required for selenoprotein biosynthesis. The sequence is that of L-seryl-tRNA(Sec) selenium transferase from Haemophilus influenzae (strain PittEE).